The chain runs to 81 residues: Exodeoxyribonuclease 7 small subunit (81 aa).

Belongs to the XseB family. Heterooligomer composed of large and small subunits.

The protein localises to the cytoplasm. It catalyses the reaction Exonucleolytic cleavage in either 5'- to 3'- or 3'- to 5'-direction to yield nucleoside 5'-phosphates.. Its function is as follows. Bidirectionally degrades single-stranded DNA into large acid-insoluble oligonucleotides, which are then degraded further into small acid-soluble oligonucleotides. The sequence is that of Exodeoxyribonuclease 7 small subunit from Nitratidesulfovibrio vulgaris (strain ATCC 29579 / DSM 644 / CCUG 34227 / NCIMB 8303 / VKM B-1760 / Hildenborough) (Desulfovibrio vulgaris).